A 161-amino-acid polypeptide reads, in one-letter code: Transcriptional repressor NrdR (161 aa).

Residues 1–11 are compositionally biased toward basic residues; sequence MQCPHCQHHNS. Residues 1–21 form a disordered region; that stretch reads MQCPHCQHHNSRVLESRSSEG. A zinc finger spans residues 3–34; it reads CPHCQHHNSRVLESRSSEGGQSIRRRRECLEC. An ATP-cone domain is found at 49–139; sequence VTVIKQDGER…VYGRFQGIAD (91 aa).

Belongs to the NrdR family. Zn(2+) serves as cofactor.

Its function is as follows. Negatively regulates transcription of bacterial ribonucleotide reductase nrd genes and operons by binding to NrdR-boxes. This Synechocystis sp. (strain ATCC 27184 / PCC 6803 / Kazusa) protein is Transcriptional repressor NrdR.